Here is a 392-residue protein sequence, read N- to C-terminus: O-phospho-L-seryl-tRNA:Cys-tRNA synthase (392 aa).

Pyridoxal 5'-phosphate is bound by residues 85–86 (AR), Asn-190, and 213–215 (SGH). Position 216 is an N6-(pyridoxal phosphate)lysine (Lys-216).

It belongs to the SepCysS family. In terms of assembly, homodimer. Interacts with SepRS. Pyridoxal 5'-phosphate serves as cofactor.

It carries out the reaction O-phospho-L-seryl-tRNA(Cys) + hydrogen sulfide + H(+) = L-cysteinyl-tRNA(Cys) + phosphate. In terms of biological role, converts O-phospho-L-seryl-tRNA(Cys) (Sep-tRNA(Cys)) to L-cysteinyl-tRNA(Cys) (Cys-tRNA(Cys)). The sequence is that of O-phospho-L-seryl-tRNA:Cys-tRNA synthase from Methanoculleus marisnigri (strain ATCC 35101 / DSM 1498 / JR1).